The sequence spans 310 residues: HPr kinase/phosphorylase (310 aa).

Active-site residues include His-138 and Lys-159. Position 153-160 (153-160 (GSSGVGKS)) interacts with ATP. Mg(2+) is bound at residue Ser-160. Asp-177 (proton acceptor; for phosphorylation activity. Proton donor; for dephosphorylation activity) is an active-site residue. The segment at 201-210 (LEIRGLGIIN) is important for the catalytic mechanism of both phosphorylation and dephosphorylation. Glu-202 provides a ligand contact to Mg(2+). Arg-243 is an active-site residue. Residues 264–269 (PVRPGR) form an important for the catalytic mechanism of dephosphorylation region.

It belongs to the HPrK/P family. In terms of assembly, homohexamer. Mg(2+) is required as a cofactor.

It catalyses the reaction [HPr protein]-L-serine + ATP = [HPr protein]-O-phospho-L-serine + ADP + H(+). It carries out the reaction [HPr protein]-O-phospho-L-serine + phosphate + H(+) = [HPr protein]-L-serine + diphosphate. Catalyzes the ATP- as well as the pyrophosphate-dependent phosphorylation of a specific serine residue in HPr, a phosphocarrier protein of the phosphoenolpyruvate-dependent sugar phosphotransferase system (PTS). HprK/P also catalyzes the pyrophosphate-producing, inorganic phosphate-dependent dephosphorylation (phosphorolysis) of seryl-phosphorylated HPr (P-Ser-HPr). The two antagonistic activities of HprK/P are regulated by several intracellular metabolites, which change their concentration in response to the absence or presence of rapidly metabolisable carbon sources (glucose, fructose, etc.) in the growth medium. Also phosphorylates/dephosphorylates the HPr-like catabolite repression protein crh on a specific serine residue. Therefore, by controlling the phosphorylation state of HPr and crh, HPrK/P is a sensor enzyme that plays a major role in the regulation of carbon metabolism and sugar transport: it mediates carbon catabolite repression (CCR), and regulates PTS-catalyzed carbohydrate uptake and inducer exclusion. The chain is HPr kinase/phosphorylase (hprK) from Halalkalibacterium halodurans (strain ATCC BAA-125 / DSM 18197 / FERM 7344 / JCM 9153 / C-125) (Bacillus halodurans).